A 578-amino-acid chain; its full sequence is Isocitrate dehydrogenase kinase/phosphatase (578 aa).

ATP is bound by residues 315-321 (APGIRGM) and Lys-336. Residue Asp-371 is part of the active site.

Belongs to the AceK family.

The protein localises to the cytoplasm. The enzyme catalyses L-seryl-[isocitrate dehydrogenase] + ATP = O-phospho-L-seryl-[isocitrate dehydrogenase] + ADP + H(+). Bifunctional enzyme which can phosphorylate or dephosphorylate isocitrate dehydrogenase (IDH) on a specific serine residue. This is a regulatory mechanism which enables bacteria to bypass the Krebs cycle via the glyoxylate shunt in response to the source of carbon. When bacteria are grown on glucose, IDH is fully active and unphosphorylated, but when grown on acetate or ethanol, the activity of IDH declines drastically concomitant with its phosphorylation. This is Isocitrate dehydrogenase kinase/phosphatase from Shigella dysenteriae serotype 1 (strain Sd197).